We begin with the raw amino-acid sequence, 511 residues long: Exodeoxyribonuclease 7 large subunit (511 aa).

The protein belongs to the XseA family. As to quaternary structure, heterooligomer composed of large and small subunits.

Its subcellular location is the cytoplasm. The enzyme catalyses Exonucleolytic cleavage in either 5'- to 3'- or 3'- to 5'-direction to yield nucleoside 5'-phosphates.. In terms of biological role, bidirectionally degrades single-stranded DNA into large acid-insoluble oligonucleotides, which are then degraded further into small acid-soluble oligonucleotides. In Brucella canis (strain ATCC 23365 / NCTC 10854 / RM-666), this protein is Exodeoxyribonuclease 7 large subunit.